Here is a 1383-residue protein sequence, read N- to C-terminus: DNA-directed RNA polymerase subunit beta (1383 aa).

It belongs to the RNA polymerase beta chain family. The RNAP catalytic core consists of 2 alpha, 1 beta, 1 beta' and 1 omega subunit. When a sigma factor is associated with the core the holoenzyme is formed, which can initiate transcription.

It carries out the reaction RNA(n) + a ribonucleoside 5'-triphosphate = RNA(n+1) + diphosphate. Its function is as follows. DNA-dependent RNA polymerase catalyzes the transcription of DNA into RNA using the four ribonucleoside triphosphates as substrates. In Xanthomonas axonopodis pv. citri (strain 306), this protein is DNA-directed RNA polymerase subunit beta.